We begin with the raw amino-acid sequence, 212 residues long: Protein FAM177A1 (212 aa).

The residue at position 1 (M1) is an N-acetylmethionine. Positions 1 to 11 are enriched in basic and acidic residues; that stretch reads MEGEPASREEG. The segment at 1 to 33 is disordered; the sequence is MEGEPASREEGEAVNASGAAAASAFRESAQQMS. Low complexity predominate over residues 13–29; that stretch reads AVNASGAAAASAFRESA. Phosphoserine is present on S69. The residue at position 70 (T70) is a Phosphothreonine. A coiled-coil region spans residues 135 to 172; the sequence is IDEYYRMKKEEEEEEEENRMSEEAERQYQQNKLQADSV. Residues 146-179 are disordered; sequence EEEEEENRMSEEAERQYQQNKLQADSVVQSDQPE. Positions 161–179 are enriched in polar residues; that stretch reads QYQQNKLQADSVVQSDQPE.

The protein belongs to the FAM177 family.

The polypeptide is Protein FAM177A1 (FAM177A1) (Bos taurus (Bovine)).